A 247-amino-acid polypeptide reads, in one-letter code: Carboxy-S-adenosyl-L-methionine synthase (247 aa).

S-adenosyl-L-methionine-binding positions include Tyr-39, 64-66, 89-90, 117-118, Asn-132, and Arg-199; these read GCS, DN, and DI.

This sequence belongs to the class I-like SAM-binding methyltransferase superfamily. Cx-SAM synthase family. In terms of assembly, homodimer.

It carries out the reaction prephenate + S-adenosyl-L-methionine = carboxy-S-adenosyl-L-methionine + 3-phenylpyruvate + H2O. Its function is as follows. Catalyzes the conversion of S-adenosyl-L-methionine (SAM) to carboxy-S-adenosyl-L-methionine (Cx-SAM). This Klebsiella pneumoniae (strain 342) protein is Carboxy-S-adenosyl-L-methionine synthase.